A 1157-amino-acid chain; its full sequence is MESPLFELNSALSAASSKSEAMLCSISSKGSWPLPEFDPSQIRLIVYQDCERRGRNVLFDSSAKRKIEDVSVSKLCSDAQVRVFGKCCQLKPGGDSSSSLDSSINSSSSFSDAKEQCPKYQGSRCSSDANMLGEMMFGSVAMSYKGSTLKIHQIRSPPQLMLSKVFTARTGSSIYGSLNTLQDSLEFINQDSNTLKPDHSTIMNGLLGNIVHSNPMDMPGREQNEDRDSGIARSASLSSLLITPFPSPGSSFNKSCASSYQRRWRRSQTTSLENGVFPRWSMDESFNLSDDSSGPSPGIVRKKKIAIGVIFSLSRDEDENNKFNEFFFSHFPLFESHMNKLKSAIEQLCLVLLICLMLVFKAMKMSRRSADASQRSLAYNRIVDALNEFRTTICNLYTMPRIGEPVWLTMMSGTPEKNQLCHRFMKEFTFLMENAAKNQFLPALLTAVLTNHLAWVPTVMPNGQPPIRIFLEKHSSQSVDMLAKTHPYNPLWAQLGDLYGAIGSPVRLAKTVVVGKRHDLVQRLLYFLTYFIRCSELQETHLLENGEDEAIVMPGTVITTTLEKGEVEESEYVLVTMHKNRGNLLPKESEEMRTPNCSCKNCKCPISLAQNIEGVSQQEREDAQNTPKVELETSSDESRTIVPDDGQEDAADGHQPRTCQDTKVESVVCTGSSSPEKRVLAESGLEATANMWRNEDVLEAGSQAISATRSPGIAVEKKPPDKLFCDAFPCSAAEAQTKVTFLIGDSMSPDSDIELRSQAVVEQIARHHSPPTAEEGVSADQNCEAKQTVEDQNRDCGTAEPFPQVASEHQSWNPNAYNAEGMSLFDDNFTDDGSVETRTMDDLPGQAAAELLTHNSNLEFSKKLCTKTSKPPSEFCKFMDSVRQETYKNCFAEQDQREKISIRVPHGDRENAEKKVAPGIDWDIPRNESSDSALGDSESEDAGHELTRPSSNYYGGEQEDWAEEYEIPFPGSKLVEVNSVQPSIANFGRSLLGGYCSSYVPDFVLQGIGSDEKLRHCLVSDLSHAVQHPVLDEPIAEAVCIIADTDKWTVQVASSQRRMIDNKLGKEVLVSSLVSNLLHSTLQLYKHNLSPNFCVMHLEDRLQELYFKSKMLSEYLKGQMRVHVKELGVVLGIESSDLPLLAAVASTHSPYVAQILL.

One can recognise a uDENN FNIP1/2-type domain in the interval Phe37–Ile467. Disordered stretches follow at residues Pro92 to Tyr120, Ser616 to Glu665, Ser769 to Cys796, and Val904 to Gly955. The span at Asp95 to Ser111 shows a compositional bias: low complexity. Residues Ser475–Gln1083 form the cDENN FNIP1/2-type domain. Over residues Ala651–Val664 the composition is skewed to basic and acidic residues. Residues Val904 to Val916 are compositionally biased toward basic and acidic residues. Positions Phe1093–His1148 constitute a dDENN FNIP1/2-type domain.

The protein belongs to the FNIP family. In terms of assembly, homodimer and homomultimer. Heterodimer and heteromultimer with FNIP2. Component of the lysosomal folliculin complex (LFC).

The protein localises to the lysosome membrane. The protein resides in the cytoplasm. It is found in the cytosol. Functionally, binding partner of the GTPase-activating protein FLCN: involved in the cellular response to amino acid availability by regulating the non-canonical mTORC1 signaling cascade controlling the MiT/TFE factors TFEB and TFE3. Required to promote FLCN recruitment to lysosomes and interaction with Rag GTPases, leading to activation of the non-canonical mTORC1 signaling. In low-amino acid conditions, component of the lysosomal folliculin complex (LFC) on the membrane of lysosomes, which inhibits the GTPase-activating activity of FLCN, thereby inactivating mTORC1 and promoting nuclear translocation of TFEB and TFE3. Upon amino acid restimulation, disassembly of the LFC complex liberates the GTPase-activating activity of FLCN, leading to activation of mTORC1 and subsequent inactivation of TFEB and TFE3. In addition to its role in mTORC1 signaling, also acts as a co-chaperone of HSP90AA1/Hsp90: inhibits the ATPase activity of HSP90AA1/Hsp90, leading to activate both kinase and non-kinase client proteins of HSP90AA1/Hsp90. Acts as a scaffold to load client protein FLCN onto HSP90AA1/Hsp90. The polypeptide is Folliculin-interacting protein 1 (Gallus gallus (Chicken)).